The chain runs to 280 residues: Borealin (280 aa).

The interval 1-58 is required for interaction with INCENP; sequence MAPRKGSSRVAKTNSLRRRKLASFLKDFDREVEIRIKQIESDRQNLLKEVDNLYNIEI. The tract at residues 1–88 is required for centromere localization; sequence MAPRKGSSRV…NKQALEEAAT (88 aa). Residues 1–140 are required for interaction with SENP3; that stretch reads MAPRKGSSRV…ENERKNLQTA (140 aa). A required to form a minimal CPC core complex that localizes to the central spindle and midbody and properly executes the role of the CPC during cytokinesis region spans residues 10–109; it reads VAKTNSLRRR…TAEAIQTPLK (100 aa). The required for interaction with INCENP and BIRC5 stretch occupies residues 20 to 78; sequence KLASFLKDFDREVEIRIKQIESDRQNLLKEVDNLYNIEILRLPKALREMNWLDYFALGG. Residues Thr-88 and Thr-94 each carry the phosphothreonine; by TTK modification. Thr-106 is modified (phosphothreonine). Ser-110 is subject to Phosphoserine. The segment at 130-169 is disordered; that stretch reads EENERKNLQTARVKRCPPSKKRTQSIQGKGKGKRSSRANT. A Glycyl lysine isopeptide (Lys-Gly) (interchain with G-Cter in SUMO2) cross-link involves residue Lys-135. A compositionally biased stretch (basic residues) spans 141 to 152; the sequence is RVKRCPPSKKRT. Position 165 is a phosphoserine; by AURKB (Ser-165). Thr-169 is subject to Phosphothreonine; by TTK. A phosphothreonine mark is found at Thr-189 and Thr-204. Phosphoserine is present on residues Ser-219 and Ser-224. Thr-230 carries the phosphothreonine; by TTK modification. 2 positions are modified to phosphoserine: Ser-238 and Ser-244.

The protein belongs to the borealin family. In terms of assembly, may form homooligomers and homodimers. Component of the chromosomal passenger complex (CPC) composed of at least BIRC5/survivin, CDCA8/borealin, INCENP, AURKB or AURKC; in the complex forms a triple-helix bundle-based subcomplex with INCENP and BIRC5. Interacts with SENP3, UBE2I and RANBP2. Interacts (phosphorylated) with SGO1 and SGO2; the association is dependent on CDK1. Phosphorylated by TTK, essentially at Thr-88, Thr94, Thr-169 and Thr-230. Phosphorylation (probably by CDK1) promotes targeting of the CPC to centromeric DNA. In terms of processing, sumoylated by UBE2I and RANBP2. Desumoylated by SENP3 through the removal of SUMO2 and SUMO3.

The protein localises to the nucleus. It is found in the nucleolus. It localises to the cytoplasm. The protein resides in the chromosome. Its subcellular location is the centromere. The protein localises to the cytoskeleton. It is found in the spindle. Functionally, component of the chromosomal passenger complex (CPC), a complex that acts as a key regulator of mitosis. The CPC complex has essential functions at the centromere in ensuring correct chromosome alignment and segregation and is required for chromatin-induced microtubule stabilization and spindle assembly. In the complex, it may be required to direct the CPC to centromeric DNA. The sequence is that of Borealin (CDCA8) from Pongo abelii (Sumatran orangutan).